The sequence spans 268 residues: 4-hydroxy-tetrahydrodipicolinate reductase (268 aa).

An NAD(+)-binding site is contributed by 8 to 13 (GAAGRM). An NADP(+)-binding site is contributed by Arg-36. NAD(+) is bound by residues 99 to 101 (GTT) and 123 to 126 (AANF). His-156 (proton donor/acceptor) is an active-site residue. His-157 contributes to the (S)-2,3,4,5-tetrahydrodipicolinate binding site. The Proton donor role is filled by Lys-160. (S)-2,3,4,5-tetrahydrodipicolinate is bound at residue 166 to 167 (GT).

Belongs to the DapB family.

It is found in the cytoplasm. It carries out the reaction (S)-2,3,4,5-tetrahydrodipicolinate + NAD(+) + H2O = (2S,4S)-4-hydroxy-2,3,4,5-tetrahydrodipicolinate + NADH + H(+). The catalysed reaction is (S)-2,3,4,5-tetrahydrodipicolinate + NADP(+) + H2O = (2S,4S)-4-hydroxy-2,3,4,5-tetrahydrodipicolinate + NADPH + H(+). The protein operates within amino-acid biosynthesis; L-lysine biosynthesis via DAP pathway; (S)-tetrahydrodipicolinate from L-aspartate: step 4/4. Catalyzes the conversion of 4-hydroxy-tetrahydrodipicolinate (HTPA) to tetrahydrodipicolinate. The protein is 4-hydroxy-tetrahydrodipicolinate reductase of Pseudomonas fluorescens (strain ATCC BAA-477 / NRRL B-23932 / Pf-5).